A 116-amino-acid chain; its full sequence is L-amino-acid oxidase BjussuLAAO-II (116 aa).

42–45 is a binding site for FAD; sequence GPMR. Substrate-binding residues include Arg-45 and His-78.

It belongs to the flavin monoamine oxidase family. FIG1 subfamily. In terms of assembly, homodimer; non-covalently linked. It depends on FAD as a cofactor. In terms of processing, glycosylated. Expressed by the venom gland.

The protein localises to the secreted. The catalysed reaction is an L-alpha-amino acid + O2 + H2O = a 2-oxocarboxylate + H2O2 + NH4(+). It catalyses the reaction L-leucine + O2 + H2O = 4-methyl-2-oxopentanoate + H2O2 + NH4(+). The enzyme catalyses L-phenylalanine + O2 + H2O = 3-phenylpyruvate + H2O2 + NH4(+). It carries out the reaction L-methionine + O2 + H2O = 4-methylsulfanyl-2-oxobutanoate + H2O2 + NH4(+). The catalysed reaction is L-isoleucine + O2 + H2O = (S)-3-methyl-2-oxopentanoate + H2O2 + NH4(+). It catalyses the reaction L-histidine + O2 + H2O = 3-(imidazol-5-yl)pyruvate + H2O2 + NH4(+). The enzyme catalyses L-tyrosine + O2 + H2O = 3-(4-hydroxyphenyl)pyruvate + H2O2 + NH4(+). It carries out the reaction L-tryptophan + O2 + H2O = indole-3-pyruvate + H2O2 + NH4(+). Its enzymatic activities is reduced by the presence of Zn(2+), Al(3+), Cu(2+), Na(+) or Ni(2+) salts. In terms of biological role, catalyzes an oxidative deamination of predominantly hydrophobic and aromatic L-amino acids, thus producing hydrogen peroxide that may contribute to the diverse toxic effects of this enzyme. Shows very high enzymatic activity on L-Met and L-Leu, high activity on L-Ile, L-Phe and L-Tyr and moderate activity on L-His. Exhibits diverse biological activities, such as hemorrhage, hemolysis, edema, apoptosis of vascular endothelial cells or tumor cell lines, and antibacterial, as well as regulation of platelet aggregation. Effects of snake L-amino oxidases on platelets are controversial, since they either induce aggregation or inhibit agonist-induced aggregation. These different effects are probably due to different experimental conditions. In vitro, has a strong antiprotozoal effect against Leishmania amazonensis (IC(50)=4.56 ug/mL) and Trypanosoma cruzi (IC(50)=4.85 ug/mL). It also causes cell death and DNA damage in hepatocarcinoma cells (HepG2) in vitro by inducing oxidative stress. It exerts cytotoxicity towards colorectal adenocarcinomahuman cells (Caco-2) by acting on multiple intracellular targets. It diminishes cell viability by decreasing mitochondrial activity, the activity of acid phosphatases, and lysosomal function. In addition, it increases intracellular levels of reactive oxygen species and DNA damage, it elevates the expression of the pro-inflammatory cytokine genes TNF and IL6, and lowers the expression of the apoptotic-related genes. Also induces cytotoxicity (IC(50)=1.80 ug/mL) and apoptosis in MCF-7 cells (a human breast adeno-carcinoma cell line) by activating the intrinsic and extrinsic apoptosis pathways, but are not cytotoxic towards MCF-10A cells (a non-tumorigenic human breast epithelial cell line). The protein is L-amino-acid oxidase BjussuLAAO-II of Bothrops jararacussu (Jararacussu).